We begin with the raw amino-acid sequence, 463 residues long: Chromosomal replication initiator protein DnaA (463 aa).

Residues 1 to 84 (MNTNQIILTN…QLFQHYNNAI (84 aa)) are domain I, interacts with DnaA modulators. The domain II stretch occupies residues 84 to 124 (IKTVEIITKELPASNQATLELPTKTFADIGSSELNSENIFS). The interval 125–343 (TFDIRFTFDN…GALNKVIAHS (219 aa)) is domain III, AAA+ region. ATP is bound by residues glycine 171, glycine 173, lysine 174, and threonine 175. Positions 344–463 (NFTAKEITLE…INLMMKILQN (120 aa)) are domain IV, binds dsDNA.

The protein belongs to the DnaA family. Oligomerizes as a right-handed, spiral filament on DNA at oriC.

Its subcellular location is the cytoplasm. In terms of biological role, plays an essential role in the initiation and regulation of chromosomal replication. ATP-DnaA binds to the origin of replication (oriC) to initiate formation of the DNA replication initiation complex once per cell cycle. Binds the DnaA box (a 9 base pair repeat at the origin) and separates the double-stranded (ds)DNA. Forms a right-handed helical filament on oriC DNA; dsDNA binds to the exterior of the filament while single-stranded (ss)DNA is stabiized in the filament's interior. The ATP-DnaA-oriC complex binds and stabilizes one strand of the AT-rich DNA unwinding element (DUE), permitting loading of DNA polymerase. After initiation quickly degrades to an ADP-DnaA complex that is not apt for DNA replication. Binds acidic phospholipids. This Rickettsia bellii (strain RML369-C) protein is Chromosomal replication initiator protein DnaA.